Consider the following 470-residue polypeptide: Argininosuccinate lyase (470 aa).

The protein belongs to the lyase 1 family. Argininosuccinate lyase subfamily.

The protein resides in the cytoplasm. It catalyses the reaction 2-(N(omega)-L-arginino)succinate = fumarate + L-arginine. It functions in the pathway amino-acid biosynthesis; L-arginine biosynthesis; L-arginine from L-ornithine and carbamoyl phosphate: step 3/3. The chain is Argininosuccinate lyase from Mycobacterium tuberculosis (strain ATCC 25618 / H37Rv).